Reading from the N-terminus, the 387-residue chain is Protein TsgA homolog (387 aa).

The next 12 membrane-spanning stretches (helical) occupy residues 11 to 31, 47 to 67, 76 to 96, 101 to 121, 134 to 154, 160 to 180, 205 to 225, 243 to 263, 271 to 291, 299 to 319, 331 to 351, and 358 to 378; these read WISF…GMIM, NIFT…SWLI, LIFG…STSI, INIF…TFII, LLLT…ISAY, ILWY…FILT, IILL…FISW, VLVS…SFII, MFIF…YSKS, IISL…LASL, LILF…SPIV, and TTLI…CIIF.

It belongs to the major facilitator superfamily. TsgA family.

The protein localises to the cell membrane. The protein is Protein TsgA homolog of Buchnera aphidicola subsp. Schizaphis graminum (strain Sg).